Consider the following 180-residue polypeptide: Acireductone dioxygenase 1 (180 aa).

Histidine 82, histidine 84, glutamate 88, and histidine 127 together coordinate Fe(2+). The Ni(2+) site is built by histidine 82, histidine 84, glutamate 88, and histidine 127.

The protein belongs to the acireductone dioxygenase (ARD) family. Fe(2+) serves as cofactor. Requires Ni(2+) as cofactor.

Its subcellular location is the cytoplasm. The protein resides in the nucleus. It carries out the reaction 1,2-dihydroxy-5-(methylsulfanyl)pent-1-en-3-one + O2 = 4-methylsulfanyl-2-oxobutanoate + formate + 2 H(+). The enzyme catalyses 1,2-dihydroxy-5-(methylsulfanyl)pent-1-en-3-one + O2 = 3-(methylsulfanyl)propanoate + CO + formate + 2 H(+). Its pathway is amino-acid biosynthesis; L-methionine biosynthesis via salvage pathway; L-methionine from S-methyl-5-thio-alpha-D-ribose 1-phosphate: step 5/6. Functionally, catalyzes 2 different reactions between oxygen and the acireductone 1,2-dihydroxy-3-keto-5-methylthiopentene (DHK-MTPene) depending upon the metal bound in the active site. Fe-containing acireductone dioxygenase (Fe-ARD) produces formate and 2-keto-4-methylthiobutyrate (KMTB), the alpha-ketoacid precursor of methionine in the methionine recycle pathway. Ni-containing acireductone dioxygenase (Ni-ARD) produces methylthiopropionate, carbon monoxide and formate, and does not lie on the methionine recycle pathway. The chain is Acireductone dioxygenase 1 from Sorghum bicolor (Sorghum).